An 858-amino-acid chain; its full sequence is Putative glutamate--cysteine ligase 2-3 (858 aa).

The tract at residues M1–L372 is carboxylate-amine ligase. The interval G373–R858 is unknown.

It in the N-terminal section; belongs to the glutamate--cysteine ligase type 2 family. YbdK subfamily.

It catalyses the reaction L-cysteine + L-glutamate + ATP = gamma-L-glutamyl-L-cysteine + ADP + phosphate + H(+). ATP-dependent carboxylate-amine ligase which exhibits weak glutamate--cysteine ligase activity. The sequence is that of Putative glutamate--cysteine ligase 2-3 from Frankia alni (strain DSM 45986 / CECT 9034 / ACN14a).